Here is a 314-residue protein sequence, read N- to C-terminus: Homeobox protein knotted-1-like 3 (314 aa).

In terms of domain architecture, ELK spans 218 to 238 (ELKIELKQGFKSRIEDVREEI). The homeobox; TALE-type DNA-binding region spans 239–302 (LRKRRAGKLP…NQRKRNWHNN (64 aa)).

It belongs to the TALE/KNOX homeobox family. Isoform 1 is expressed in roots and flowers, and at lower levels in leaf blades and leaf sheaths. Isoform 2 is expressed in roots and flowers.

The protein localises to the nucleus. The protein is Homeobox protein knotted-1-like 3 (HOS66) of Oryza sativa subsp. japonica (Rice).